Reading from the N-terminus, the 1001-residue chain is MRPPARMPKLTRRSRVLIGVALAAVVLLLIGPRFIDTYVNWLWFGELGYRSVFTTVLFTRVVVFLVVSLLIGAIVFAGLALAYRTRPVFVPTAGPNDPIARYRTTVMARLRLFGFGVPAFIGILSGIVAQSYWVRIQLYLHGGEFGVTDPQFGLDLGFYAFDLPFYRLVLSYLFVATFLAFIANLLGHYLFGGIRLTGRNGALTRSARIQLVTLVGILILLKAFAYWLDRYELLSHTRGGKPFTGAGYTDINAVLPAKLILLAIAVICAVAVFSAIVLRDLRIPAIGVVLLLLSSLVVGAGWPLVVEQFSVKPNAAQKESEYISRSIAATRQAYGLTDEVVTYRDYPGNAPATAQQVAADRSTTSNIRVLDPNIVSPAFTQFQQGKNFYFFPEQLAMDRYRDADGNLRDYVVAARELNPDRLIDNQRDWINRHTVYTHGNGFIASPANTVRGIANDPNQNGGYPEFLASVVGANGNVVSPGPAPLDQPRIYFGPVIANTASDYAIVGENGTPREYDYENNVETRNYTYTGSGGVPIGNWLTRSLFAAKFAERNFLFSNVIGENSKILFNRDPADRVEAVAPWLTTDTTVYPAIVNKKIVWIVDGYTTLDNYPYSELTSLSSATADSNEVAVNRLALNKQVSYIRNSVKATVDAYDGTVTLYAQDETDPVLQAWMKVFPDTIKPKSEISPELQQHLRYPEDLFKVQRALLAKYHVDDPVTFFSTSDFWDVPLDPNPTASSFQPPYYIVAKDLAENNNSAAFQLTSAMNRFRRDFLAAYMSASSDPETYGKITVLTIPGQVNGPKLAFNAISTDTAVSQDLGVIGRDNQNRIRWGNLLTLPVGPGGLLYVAPVYASPGTSDAASTYPRLIRVAMFYNDQVGYGPTVRDALTDLFGAGADATATGPAPANLPDGQPAAQPPNGQQPAAQTPGNQAGRASTPPPAAIPSGPSGPQQLSEAKAAALQEVQEAMSGLQDAQRSGNFAEYGEALQRLDDAMNRYSEAR.

7 consecutive transmembrane segments (helical) span residues Val-16–Asp-36, Val-61–Leu-81, Leu-112–Tyr-132, Phe-174–Ile-194, Ile-209–Asp-229, Lys-258–Leu-278, and Ile-286–Val-306. The segment covering Ala-900–Gly-929 has biased composition (low complexity). The segment at Ala-900–Ser-977 is disordered.

Belongs to the UPF0182 family.

It is found in the cell membrane. The chain is UPF0182 protein Mjls_1469 from Mycobacterium sp. (strain JLS).